An 879-amino-acid polypeptide reads, in one-letter code: Metabotropic glutamate receptor 3 (879 aa).

A signal peptide spans 1-22 (MKMLTRLQVLTLALFSKGFLLS). At 23–576 (LGDHNFLRRE…EDYIRWEDAW (554 aa)) the chain is on the extracellular side. A disulfide bridge links Cys57 with Cys99. Residues Ser151 and 172–174 (AST) contribute to the L-glutamate site. Asn209 carries N-linked (GlcNAc...) asparagine glycosylation. An L-glutamate-binding site is contributed by Tyr222. Intrachain disulfides connect Cys240/Cys527, Cys361/Cys373, Cys412/Cys419, Cys509/Cys528, Cys513/Cys531, Cys534/Cys546, and Cys549/Cys562. A glycan (N-linked (GlcNAc...) asparagine) is linked at Asn292. Residue Asp301 coordinates L-glutamate. Lys389 contacts L-glutamate. N-linked (GlcNAc...) asparagine glycans are attached at residues Asn414 and Asn439. Residues 577-599 (VIGPVTIACLGFMCTCMVVTVFI) form a helical membrane-spanning segment. Topologically, residues 600-613 (KHNNTPLVKASGRE) are cytoplasmic. A helical membrane pass occupies residues 614 to 634 (LCYILLFGVGLSYCMTFFFIA). The Extracellular segment spans residues 635-645 (KPSPVICALRR). Residues 646–664 (LGLGSSFAICYSALLTKTN) form a helical membrane-spanning segment. At 665–688 (CIARIFDGVKNGAQRPKFISPSSQ) the chain is on the cytoplasmic side. A helical transmembrane segment spans residues 689–709 (VFICLGLILVQIVMVSVWLIL). The Extracellular segment spans residues 710-734 (EAPGTRRYTLAEKRETVILKCNVKD). Residues 735-756 (SSMLISLTYDVILVILCTVYAF) traverse the membrane as a helical segment. Residues 757–769 (KTRKCPENFNEAK) are Cytoplasmic-facing. A helical membrane pass occupies residues 770 to 792 (FIGFTMYTTCIIWLAFLPIFYVT). Residues 793 to 802 (SSDYRVQTTT) are Extracellular-facing. Residues 803–828 (MCISVSLSGFVVLGCLFAPKVHIILF) form a helical membrane-spanning segment. Topologically, residues 829–879 (QPQKNVVTHRLHLNRFSVSGTGTTYSQSSASTYVPTVCNGREVLDSTTSSL) are cytoplasmic.

Belongs to the G-protein coupled receptor 3 family. Interacts with TAMALIN.

The protein localises to the cell membrane. G-protein coupled receptor for glutamate. Ligand binding causes a conformation change that triggers signaling via guanine nucleotide-binding proteins (G proteins) and modulates the activity of down-stream effectors. Signaling inhibits adenylate cyclase activity. The chain is Metabotropic glutamate receptor 3 (GRM3) from Pongo abelii (Sumatran orangutan).